The primary structure comprises 413 residues: Phosphatidylcholine-sterol acyltransferase (413 aa).

The signal sequence occupies residues 1–22; the sequence is GRTGAGFTLLTLLLLLPQPTSQ. The cysteines at positions 72 and 96 are disulfide-linked. Asn106 carries an N-linked (GlcNAc...) asparagine glycan. Ser203 acts as the Charge relay system in catalysis. Ser203 (nucleophile) is an active-site residue. Asn294 is a glycosylation site (N-linked (GlcNAc...) asparagine). A disulfide bridge links Cys335 with Cys378. Active-site charge relay system residues include Asp367 and His399. Asn406 is a glycosylation site (N-linked (GlcNAc...) asparagine).

Belongs to the AB hydrolase superfamily. Lipase family. As to expression, detected in blood plasma (at protein level). Expressed in liver, brain and adrenal glands. Lower expression in testes. In laying hens, expressed higher in brain than in liver. In roosters, higher levels in liver than in brain.

The protein localises to the secreted. The catalysed reaction is a sterol + a 1,2-diacyl-sn-glycero-3-phosphocholine = a sterol ester + a 1-acyl-sn-glycero-3-phosphocholine. With respect to regulation, APOA1 is the most potent activator in plasma. Also activated by APOE, APOC1 and APOA4. Its function is as follows. Central enzyme in the extracellular metabolism of plasma lipoproteins. Synthesized mainly in the liver and secreted into plasma where it converts cholesterol and phosphatidylcholines (lecithins) to cholesteryl esters and lysophosphatidylcholines on the surface of high and low density lipoproteins (HDLs and LDLs). The cholesterol ester is then transported back to the liver. Also produced in the brain by primary astrocytes, and esterifies free cholesterol on nascent APOE-containing lipoproteins secreted from glia and influences cerebral spinal fluid (CSF) APOE- and APOA1 levels. Together with APOE and the cholesterol transporter ABCA1, plays a key role in the maturation of glial-derived, nascent lipoproteins. Required for remodeling high-density lipoprotein particles into their spherical forms. Has a preference for plasma 16:0-18:2 or 18:O-18:2 phosphatidylcholines. This chain is Phosphatidylcholine-sterol acyltransferase (LCAT), found in Gallus gallus (Chicken).